The chain runs to 64 residues: Putative neurotoxin-H (64 aa).

The N-terminal stretch at 1-19 (MYATVTVTVLLLISSGIFC) is a signal peptide. 3 disulfide bridges follow: Cys-25-Cys-45, Cys-32-Cys-54, and Cys-36-Cys-56.

As to expression, expressed by the venom gland.

The protein resides in the secreted. In Lychas mucronatus (Chinese swimming scorpion), this protein is Putative neurotoxin-H.